We begin with the raw amino-acid sequence, 142 residues long: Arginine decarboxylase proenzyme (142 aa).

Residue Ser81 is the Schiff-base intermediate with substrate; via pyruvic acid of the active site. Residue Ser81 is modified to Pyruvic acid (Ser); by autocatalysis. His86 functions as the Proton acceptor; for processing activity in the catalytic mechanism. The Proton donor; for catalytic activity role is filled by Cys101.

The protein belongs to the prokaryotic AdoMetDC family. Type 1 subfamily. Heterooctamer of four alpha and four beta chains arranged as a tetramer of alpha/beta heterodimers. Pyruvate serves as cofactor. Post-translationally, is synthesized initially as an inactive proenzyme. Formation of the active enzyme involves a self-maturation process in which the active site pyruvoyl group is generated from an internal serine residue via an autocatalytic post-translational modification. Two non-identical subunits are generated from the proenzyme in this reaction, and the pyruvate is formed at the N-terminus of the alpha chain, which is derived from the carboxyl end of the proenzyme. The post-translation cleavage follows an unusual pathway, termed non-hydrolytic serinolysis, in which the side chain hydroxyl group of the serine supplies its oxygen atom to form the C-terminus of the beta chain, while the remainder of the serine residue undergoes an oxidative deamination to produce ammonia and the pyruvoyl group blocking the N-terminus of the alpha chain.

The enzyme catalyses L-arginine + H(+) = agmatine + CO2. Its pathway is amine and polyamine biosynthesis; agmatine biosynthesis; agmatine from L-arginine: step 1/1. In terms of biological role, specifically catalyzes the decarboxylation of L-arginine to agmatine. Has no S-adenosylmethionine decarboxylase (AdoMetDC) activity. This is Arginine decarboxylase proenzyme from Hyperthermus butylicus (strain DSM 5456 / JCM 9403 / PLM1-5).